The primary structure comprises 349 residues: Insulin gene enhancer protein isl-1 (349 aa).

2 consecutive LIM zinc-binding domains span residues 17 to 70 (CVGC…CKRD) and 79 to 133 (CAKC…RADH). A DNA-binding region (homeobox) is located at residues 181 to 240 (TTRVRTVLNEKQLHTLRTCYNANPRPDALMKEQLVEMTGLSPRVIRVWFQNKRCKDKKRS). The interval 312 to 349 (VNFSEGGPGSNSTGSEVASMSSQLPDTPNSMVASPIEA) is disordered. The span at 321-343 (SNSTGSEVASMSSQLPDTPNSMV) shows a compositional bias: polar residues.

It is found in the nucleus. In terms of biological role, DNA-binding transcriptional activator. Recognizes and binds to the consensus octamer binding site 5'-ATAATTAA-3' in promoter of target genes. Plays a fundamental role in the gene regulatory network essential for retinal ganglion cell (RGC) differentiation. May be involved in subtype specialization of primary motoneurons. May bind to insulin gene enhancer sequences. Essential for heart development. The sequence is that of Insulin gene enhancer protein isl-1 (isl1) from Danio rerio (Zebrafish).